The primary structure comprises 693 residues: MIRYIILLVYFLIFEVNSQLDCSKAPTPAIRIMCNQIQRWDQKARATPSLSGDVKTPGIAGKAMAAEFSPIASNVFQCMDIACLCVFFRGTGGNNCVVQGRPLGKVVRKEYRMLSDDERQRLHQAFRTLKQNGEYDRLARVHAQYSESGAAHSGPAFLPWHREFVKRMEFLIRQVDPSLHLPYWDSSLDQNLPDSKDSILWTNEFMGDANGEVNNGPFRSWKTVENKPAITRAVGAQGKGYSEDEINTMLGQTDIAQVLAFSAPQRGCPYQPNFNVPEYTHGNPHIYVGGDMLETSTAANDPIFWMHHSFVDLLWEMYRQSKQTRATRETAYPADNRQCSSEHHFRAAFMRPFTPMRNADGLSNMYTDNLYSYAPRPSCNAGPTCGSPYLFCDKSHGAPRCAVRMKPEGNCASFKNGEDACYQGSCQSGKCVAGSQNVTPPPTIQPTKPVVTVEVFSETCLKIRLKFFQTSCFNENECCGPWSAKGECQKNPVYMNVWCKASCRQCTPNYNINEECSDRHTNCAMWSRSGECNKNPLWMSENCRSSCQKCGRSRAATCGGGGGADSISNPTTMPPATNNGQQNTPCDSPMCYNEDQCCPIWAQRGQCRSNPGYMTCQCKVSCGVCRPNYVYGPCADYHYDCAAWARRGECLKNKWMPENCRRSCNTCVNQQQLAARCATRIVRSAFLELIRMK.

A signal peptide spans 1–18; that stretch reads MIRYIILLVYFLIFEVNS. 6 residues coordinate Cu cation: His-142, His-152, His-161, His-281, His-285, and His-308. ShKT domains are found at residues 472–506, 516–550, 591–625, and 634–667; these read CFNE…CRQC, CSDR…CQKC, CYNE…CGVC, and CADY…CNTC. Disulfide bonds link Cys-472/Cys-506, Cys-479/Cys-499, Cys-488/Cys-503, Cys-516/Cys-550, Cys-523/Cys-543, Cys-532/Cys-547, Cys-591/Cys-625, Cys-598/Cys-618, Cys-607/Cys-622, Cys-634/Cys-667, Cys-641/Cys-660, and Cys-650/Cys-664.

This sequence belongs to the tyrosinase family. The cofactor is Cu(2+).

This is Putative tyrosinase-like protein tyr-3 (tyr-3) from Caenorhabditis elegans.